Here is a 246-residue protein sequence, read N- to C-terminus: Probable transcriptional regulatory protein APP7_1210 (246 aa).

The protein belongs to the TACO1 family.

It localises to the cytoplasm. The protein is Probable transcriptional regulatory protein APP7_1210 of Actinobacillus pleuropneumoniae serotype 7 (strain AP76).